The chain runs to 79 residues: Dolichyl-diphosphooligosaccharide--protein glycosyltransferase subunit DAD1 (79 aa).

Over 1–19 the chain is Lumenal; the sequence is AVATALIQVAYMGLVGSFP. A helical membrane pass occupies residues 20–40; that stretch reads FNSFLSGVLSCIGTAVLAVCL. At 41 to 58 the chain is on the cytoplasmic side; it reads RIQVNKDNKEFKDLPPER. The chain crosses the membrane as a helical span at residues 59–79; it reads AFADFVLCNLVLHLVIMNFLG.

It belongs to the DAD/OST2 family. As to quaternary structure, component of the oligosaccharyltransferase (OST) complex.

The protein resides in the endoplasmic reticulum membrane. It participates in protein modification; protein glycosylation. Functionally, subunit of the oligosaccharyl transferase (OST) complex that catalyzes the initial transfer of a defined glycan (Glc(3)Man(9)GlcNAc(2) in eukaryotes) from the lipid carrier dolichol-pyrophosphate to an asparagine residue within an Asn-X-Ser/Thr consensus motif in nascent polypeptide chains, the first step in protein N-glycosylation. N-glycosylation occurs cotranslationally and the complex associates with the Sec61 complex at the channel-forming translocon complex that mediates protein translocation across the endoplasmic reticulum (ER). All subunits are required for a maximal enzyme activity. In Zea mays (Maize), this protein is Dolichyl-diphosphooligosaccharide--protein glycosyltransferase subunit DAD1 (DAD1).